The primary structure comprises 239 residues: ASTQQTPAQSPTASPTVSTPVAYVDRPLTASPAQLPPLPYDAGALSKAIDAETMRIHHDRHHQTYVDNLNTALKDQPNLQNLSIEAMLRDLNAVPENIRNTIRNNAGGHLNHTIFWQIMSPDGGGQPTGAIAQAINQTFGNFESFRKQFNEAGGDRFGSGWVWLVRNAQGQLQIVSTANQDNPIMEGNYPIMGNDVWEHAYYLRYQNRRADYLNNWWNVVNWNEINRRFQAASQQQARS.

Positions 1 to 19 (ASTQQTPAQSPTASPTVST) are enriched in polar residues. The tract at residues 1-20 (ASTQQTPAQSPTASPTVSTP) is disordered. The first 30 residues, 1–30 (ASTQQTPAQSPTASPTVSTPVAYVDRPLTA), serve as a signal peptide directing secretion. His-57, His-112, Asp-195, and His-199 together coordinate Mn(2+).

It belongs to the iron/manganese superoxide dismutase family. As to quaternary structure, homodimer. Mn(2+) serves as cofactor.

It carries out the reaction 2 superoxide + 2 H(+) = H2O2 + O2. Its function is as follows. Destroys superoxide anion radicals which are normally produced within the cells and which are toxic to biological systems. This chain is Superoxide dismutase [Mn] 3 (sodA3), found in Leptolyngbya boryana (Plectonema boryanum).